Consider the following 216-residue polypeptide: MLWKNLDELFLKYDRVVILTLSSGLSSYFESLSIIKEDYKDKHLVCIDSRSVSIGILWLVDEINLLLKNNPSDEELISLVKQRSQKIIGGVIVNNLDQLIAGGRVKKTKGIIAKALRLKLIVRWNGQLDFMDKTPNLSTAIDKLLDIIDNQNHWRTNGIKNIAILTDLENESQINSLKTSLQEKIRQTIEIKISYLPGCIYAHVGLNNFAILIEAK.

The region spanning 1–215 is the DegV domain; the sequence is MLWKNLDELF…LNNFAILIEA (215 aa). S26 provides a ligand contact to hexadecanoate.

Its function is as follows. May bind long-chain fatty acids, such as palmitate, and may play a role in lipid transport or fatty acid metabolism. The protein is DegV domain-containing protein UU190 of Ureaplasma parvum serovar 3 (strain ATCC 700970).